The primary structure comprises 154 residues: Small ribosomal subunit protein uS9 (154 aa).

Residues 133–154 are disordered; sequence RAKESKKYGLKKARKAPQYSKR. Over residues 140 to 154 the composition is skewed to basic residues; sequence YGLKKARKAPQYSKR.

The protein belongs to the universal ribosomal protein uS9 family.

The sequence is that of Small ribosomal subunit protein uS9 from Salinispora tropica (strain ATCC BAA-916 / DSM 44818 / JCM 13857 / NBRC 105044 / CNB-440).